The chain runs to 338 residues: Holliday junction branch migration complex subunit RuvB (338 aa).

Positions 1 to 181 (MEERILTQNF…FGVINRLDYY (181 aa)) are large ATPase domain (RuvB-L). ATP contacts are provided by residues leucine 20, arginine 21, glycine 62, lysine 65, threonine 66, threonine 67, 128 to 130 (EDF), arginine 171, tyrosine 181, and arginine 218. Threonine 66 serves as a coordination point for Mg(2+). The tract at residues 182–252 (SVEELKEIIK…TSKEALDVLG (71 aa)) is small ATPAse domain (RuvB-S). Residues 255–338 (EIGLEYIDRK…YIEQGRIEGV (84 aa)) are head domain (RuvB-H). Residues arginine 310 and arginine 315 each contribute to the DNA site.

This sequence belongs to the RuvB family. In terms of assembly, homohexamer. Forms an RuvA(8)-RuvB(12)-Holliday junction (HJ) complex. HJ DNA is sandwiched between 2 RuvA tetramers; dsDNA enters through RuvA and exits via RuvB. An RuvB hexamer assembles on each DNA strand where it exits the tetramer. Each RuvB hexamer is contacted by two RuvA subunits (via domain III) on 2 adjacent RuvB subunits; this complex drives branch migration. In the full resolvosome a probable DNA-RuvA(4)-RuvB(12)-RuvC(2) complex forms which resolves the HJ.

It is found in the cytoplasm. It carries out the reaction ATP + H2O = ADP + phosphate + H(+). The RuvA-RuvB-RuvC complex processes Holliday junction (HJ) DNA during genetic recombination and DNA repair, while the RuvA-RuvB complex plays an important role in the rescue of blocked DNA replication forks via replication fork reversal (RFR). RuvA specifically binds to HJ cruciform DNA, conferring on it an open structure. The RuvB hexamer acts as an ATP-dependent pump, pulling dsDNA into and through the RuvAB complex. RuvB forms 2 homohexamers on either side of HJ DNA bound by 1 or 2 RuvA tetramers; 4 subunits per hexamer contact DNA at a time. Coordinated motions by a converter formed by DNA-disengaged RuvB subunits stimulates ATP hydrolysis and nucleotide exchange. Immobilization of the converter enables RuvB to convert the ATP-contained energy into a lever motion, pulling 2 nucleotides of DNA out of the RuvA tetramer per ATP hydrolyzed, thus driving DNA branch migration. The RuvB motors rotate together with the DNA substrate, which together with the progressing nucleotide cycle form the mechanistic basis for DNA recombination by continuous HJ branch migration. Branch migration allows RuvC to scan DNA until it finds its consensus sequence, where it cleaves and resolves cruciform DNA. This chain is Holliday junction branch migration complex subunit RuvB, found in Thermoanaerobacter pseudethanolicus (strain ATCC 33223 / 39E) (Clostridium thermohydrosulfuricum).